The primary structure comprises 190 residues: Threonylcarbamoyl-AMP synthase (190 aa).

Residues 7–190 (TGSIAAVVDL…ALTGELFRQG (184 aa)) enclose the YrdC-like domain.

It belongs to the SUA5 family. TsaC subfamily.

The protein resides in the cytoplasm. The catalysed reaction is L-threonine + hydrogencarbonate + ATP = L-threonylcarbamoyladenylate + diphosphate + H2O. Its function is as follows. Required for the formation of a threonylcarbamoyl group on adenosine at position 37 (t(6)A37) in tRNAs that read codons beginning with adenine. Catalyzes the conversion of L-threonine, HCO(3)(-)/CO(2) and ATP to give threonylcarbamoyl-AMP (TC-AMP) as the acyladenylate intermediate, with the release of diphosphate. This is Threonylcarbamoyl-AMP synthase from Salmonella paratyphi A (strain ATCC 9150 / SARB42).